The primary structure comprises 402 residues: Type II NADH:quinone oxidoreductase (402 aa).

Residues 12–16 (GAGYA), 39–40 (NK), and Val-83 contribute to the FAD site. Glu-172 is a catalytic residue. FAD is bound by residues Asp-302, 319–320 (AQ), and Lys-379.

The protein belongs to the NADH dehydrogenase family. Homodimer in solution. Forms homotetramers; dimer of dimers. FAD is required as a cofactor.

The protein resides in the cell membrane. It carries out the reaction a quinone + NADH + H(+) = a quinol + NAD(+). The enzyme catalyses a menaquinone + NADH + H(+) = a menaquinol + NAD(+). The catalysed reaction is a ubiquinone + NADH + H(+) = a ubiquinol + NAD(+). Its activity is regulated as follows. Inhibited by HQNO, a quinone derivative. Alternative, nonproton pumping NADH:quinone oxidoreductase that delivers electrons to the respiratory chain by oxidation of NADH and reduction of quinones, and contributes to the regeneration of NAD(+). Can use DMN, a menaquinone analog, 2,3-dimethoxy-5,6-dimethyl-benzoquinone (DDB), an ubiquinone analog, or 2,3,5,6-tetramethyl-1,4-benzoquinone (Duroquinone, DQ) a plastoquinone analog as electron acceptors. The sequence is that of Type II NADH:quinone oxidoreductase from Staphylococcus aureus (strain NCTC 8325 / PS 47).